Here is a 312-residue protein sequence, read N- to C-terminus: Tetraacyldisaccharide 4'-kinase (312 aa).

ATP is bound at residue 60–67 (IAGGSGKT).

Belongs to the LpxK family.

It catalyses the reaction a lipid A disaccharide + ATP = a lipid IVA + ADP + H(+). Its pathway is glycolipid biosynthesis; lipid IV(A) biosynthesis; lipid IV(A) from (3R)-3-hydroxytetradecanoyl-[acyl-carrier-protein] and UDP-N-acetyl-alpha-D-glucosamine: step 6/6. In terms of biological role, transfers the gamma-phosphate of ATP to the 4'-position of a tetraacyldisaccharide 1-phosphate intermediate (termed DS-1-P) to form tetraacyldisaccharide 1,4'-bis-phosphate (lipid IVA). The protein is Tetraacyldisaccharide 4'-kinase of Helicobacter pylori (strain HPAG1).